A 228-amino-acid chain; its full sequence is MEYKILDKGFLRLVDMMGDDYAAVKAARVSYGKGIKTPEKDKNLIFYLMEHGHETPFEHIVFTFHVKAPIFVARQWFRHRIGSFNEASLRYTELKDEFYIPDHVRKNVVEDKQKAIKVDDEQLKQKALDLIESSIENSYKVYKELLEMGVAREMARIVLPMSSYTQFYWTVNARSLMNFLNLRADSHAQWEIQQYALNIANIFKEKCPWTFEAFLKFAYKGDLLKGGE.

Positions 1-217 constitute a ThyX domain; sequence MEYKILDKGF…PWTFEAFLKF (217 aa). FAD is bound by residues T55, 78 to 80, and E86; that span reads RHR. Residues 75 to 78, 86 to 90, and R156 each bind dUMP; these read QWFR and EASLR. The ThyX motif motif lies at 78–88; that stretch reads RHRIGSFNEAS. FAD-binding positions include 172–174 and N178; that span reads NAR. R183 lines the dUMP pocket. The Involved in ionization of N3 of dUMP, leading to its activation role is filled by R183.

This sequence belongs to the thymidylate synthase ThyX family. In terms of assembly, homotetramer. FAD is required as a cofactor.

It carries out the reaction dUMP + (6R)-5,10-methylene-5,6,7,8-tetrahydrofolate + NADPH + H(+) = dTMP + (6S)-5,6,7,8-tetrahydrofolate + NADP(+). It functions in the pathway pyrimidine metabolism; dTTP biosynthesis. Its function is as follows. Catalyzes the reductive methylation of 2'-deoxyuridine-5'-monophosphate (dUMP) to 2'-deoxythymidine-5'-monophosphate (dTMP) while utilizing 5,10-methylenetetrahydrofolate (mTHF) as the methyl donor, and NADPH and FADH(2) as the reductant. In Thermosipho africanus (strain TCF52B), this protein is Flavin-dependent thymidylate synthase.